Here is a 446-residue protein sequence, read N- to C-terminus: tRNA modification GTPase MnmE (446 aa).

R22, E80, and R119 together coordinate (6S)-5-formyl-5,6,7,8-tetrahydrofolate. A TrmE-type G domain is found at 215 to 370 (GFKVAIIGKP…LILALENIMN (156 aa)). N225 serves as a coordination point for K(+). GTP-binding positions include 225–230 (NVGKSS), 244–250 (SDIAGTT), and 269–272 (DTAG). S229 is a binding site for Mg(2+). Residues S244, I246, and T249 each contribute to the K(+) site. T250 is a Mg(2+) binding site. Residue K446 coordinates (6S)-5-formyl-5,6,7,8-tetrahydrofolate.

This sequence belongs to the TRAFAC class TrmE-Era-EngA-EngB-Septin-like GTPase superfamily. TrmE GTPase family. In terms of assembly, homodimer. Heterotetramer of two MnmE and two MnmG subunits. K(+) serves as cofactor.

It localises to the cytoplasm. Functionally, exhibits a very high intrinsic GTPase hydrolysis rate. Involved in the addition of a carboxymethylaminomethyl (cmnm) group at the wobble position (U34) of certain tRNAs, forming tRNA-cmnm(5)s(2)U34. In Sulfurimonas denitrificans (strain ATCC 33889 / DSM 1251) (Thiomicrospira denitrificans (strain ATCC 33889 / DSM 1251)), this protein is tRNA modification GTPase MnmE.